The chain runs to 359 residues: Cytochrome c oxidase subunit 2 (359 aa).

The signal sequence occupies residues 1–28 (MEQQNKRGLKRKALLGGVLGSGGLAMAG). C29 carries N-palmitoyl cysteine lipidation. The S-diacylglycerol cysteine moiety is linked to residue C29. A run of 2 helical transmembrane segments spans residues 64 to 84 (VWVA…TAIF) and 107 to 127 (VPLE…LFFF). The Cu cation site is built by H244, C285, E287, C289, H293, and M296. Residues 338 to 359 (STAPFVSDRTGTRDGENFQTPA) are disordered.

It belongs to the cytochrome c oxidase subunit 2 family. Associates with subunits I, III and IV to form cytochrome c oxidase. Binuclear copper center (CuA) serves as cofactor.

The protein localises to the cell membrane. It carries out the reaction 4 Fe(II)-[cytochrome c] + O2 + 8 H(+)(in) = 4 Fe(III)-[cytochrome c] + 2 H2O + 4 H(+)(out). Subunits I and II form the functional core of the enzyme complex. Electrons originating in cytochrome c are transferred via heme a and Cu(A) to the binuclear center formed by heme a3 and Cu(B). The sequence is that of Cytochrome c oxidase subunit 2 (ctaC) from Corynebacterium efficiens (strain DSM 44549 / YS-314 / AJ 12310 / JCM 11189 / NBRC 100395).